The sequence spans 119 residues: Beta-2-microglobulin (119 aa).

The signal sequence occupies residues 1-20 (MARFVVAALLVLLCLSGLEA). The Ig-like C1-type domain occupies 25–114 (PKIQVYSRHP…VTFPTPKTVK (90 aa)). Residues Cys-45 and Cys-100 are joined by a disulfide bond.

The protein belongs to the beta-2-microglobulin family. In terms of assembly, heterodimer of an alpha chain and a beta chain. Beta-2-microglobulin is the beta-chain of major histocompatibility complex class I molecules.

The protein localises to the secreted. In terms of biological role, component of the class I major histocompatibility complex (MHC). Involved in the presentation of peptide antigens to the immune system. This Cebus albifrons (White-fronted capuchin) protein is Beta-2-microglobulin (B2M).